We begin with the raw amino-acid sequence, 83 residues long: Disintegrin isoform D-3 (83 aa).

Residues 2 to 83 (PPVCGNELLE…GKSSDCPWNH (82 aa)) enclose the Disintegrin domain. Cystine bridges form between cysteine 5/cysteine 24, cysteine 16/cysteine 34, cysteine 18/cysteine 29, cysteine 28/cysteine 51, cysteine 42/cysteine 48, cysteine 47/cysteine 72, and cysteine 60/cysteine 79. Residues 64–66 (RGD) carry the Cell attachment site motif.

It belongs to the venom metalloproteinase (M12B) family. P-II subfamily. P-IIa sub-subfamily. As to quaternary structure, monomer (disintegrin). In terms of tissue distribution, expressed by the venom gland.

The protein resides in the secreted. Functionally, inhibits fibrinogen interaction with platelets. Acts by binding to alpha-IIb/beta-3 (ITGA2B/ITGB3) on the platelet surface and inhibits aggregation induced by ADP, thrombin, platelet-activating factor and collagen. The polypeptide is Disintegrin isoform D-3 (Bitis arietans (African puff adder)).